The sequence spans 494 residues: Nuclear distribution protein PAC1 (494 aa).

In terms of domain architecture, LisH spans 14–46 (QKNELDKSVLRYLNWNYKQTVRHEHAQDYESVR). The stretch at 90-123 (NSIVRLQKKIIELEQNTETLVSQIKDLNTQVSEL) forms a coiled coil. WD repeat units follow at residues 153 to 192 (NVESSVTSVKLHPNLPIVFVATDHGKLYAFDLFNYTIPLA), 196 to 244 (SHTK…CKFQ), 251 to 292 (GHEH…SLKT), 295 to 334 (PHSQWVRSIDVLGDYIISGSHDTTLRLTHWPSGNGLSVGT), 347 to 395 (HFIE…LMAH), 415 to 454 (GHLSWVRDISIRGQYLFSCADDKSVRCWDLNTGQCLHVWE), and 457 to 492 (HTGFVNCLDLDVDFDSNVTPRQMMVTGGLDCKSNVF).

This sequence belongs to the WD repeat LIS1/nudF family. As to quaternary structure, self-associates. Interacts with NDL1 and dynein.

The protein localises to the cytoplasm. Its subcellular location is the cytoskeleton. The protein resides in the spindle pole. Positively regulates the activity of the minus-end directed microtubule motor protein dynein. Plays a central role in positioning the mitotic spindle at the bud neck during cell division. Targets cytoplasmic dynein to microtubule plus ends, thereby promoting dynein-mediated microtubule sliding along the bud cortex and consequently the movement of the mitotic spindle to the bud neck. The chain is Nuclear distribution protein PAC1 from Saccharomyces cerevisiae (strain RM11-1a) (Baker's yeast).